Reading from the N-terminus, the 184-residue chain is Cytidylate kinase (184 aa).

8 to 16 (GQPGSGKTT) lines the ATP pocket.

It belongs to the cytidylate kinase family. Type 2 subfamily.

It localises to the cytoplasm. It catalyses the reaction CMP + ATP = CDP + ADP. The catalysed reaction is dCMP + ATP = dCDP + ADP. The protein is Cytidylate kinase of Pyrobaculum islandicum (strain DSM 4184 / JCM 9189 / GEO3).